The following is a 263-amino-acid chain: 4-hydroxy-tetrahydrodipicolinate reductase (263 aa).

NAD(+) is bound by residues 8–13 (GACGRM), aspartate 34, 99–101 (GTT), and 125–128 (SPNY). Histidine 157 serves as the catalytic Proton donor/acceptor. Histidine 158 contacts (S)-2,3,4,5-tetrahydrodipicolinate. Lysine 161 (proton donor) is an active-site residue. 167–168 (GT) serves as a coordination point for (S)-2,3,4,5-tetrahydrodipicolinate.

It belongs to the DapB family.

Its subcellular location is the cytoplasm. The enzyme catalyses (S)-2,3,4,5-tetrahydrodipicolinate + NAD(+) + H2O = (2S,4S)-4-hydroxy-2,3,4,5-tetrahydrodipicolinate + NADH + H(+). The catalysed reaction is (S)-2,3,4,5-tetrahydrodipicolinate + NADP(+) + H2O = (2S,4S)-4-hydroxy-2,3,4,5-tetrahydrodipicolinate + NADPH + H(+). It functions in the pathway amino-acid biosynthesis; L-lysine biosynthesis via DAP pathway; (S)-tetrahydrodipicolinate from L-aspartate: step 4/4. Functionally, catalyzes the conversion of 4-hydroxy-tetrahydrodipicolinate (HTPA) to tetrahydrodipicolinate. This is 4-hydroxy-tetrahydrodipicolinate reductase from Methanosarcina acetivorans (strain ATCC 35395 / DSM 2834 / JCM 12185 / C2A).